Consider the following 860-residue polypeptide: Leucine--tRNA ligase (860 aa).

Positions 42–52 (PYPSGRLHMGH) match the 'HIGH' region motif. A 'KMSKS' region motif is present at residues 619-623 (KMSKS). Lysine 622 serves as a coordination point for ATP.

Belongs to the class-I aminoacyl-tRNA synthetase family.

It is found in the cytoplasm. It carries out the reaction tRNA(Leu) + L-leucine + ATP = L-leucyl-tRNA(Leu) + AMP + diphosphate. This chain is Leucine--tRNA ligase, found in Shigella sonnei (strain Ss046).